The chain runs to 494 residues: Anaerobic nitric oxide reductase flavorubredoxin (494 aa).

Positions 30 to 210 (TKGTSYNSYL…PFSALVTAKI (181 aa)) are zinc metallo-hydrolase. 6 residues coordinate Fe cation: His79, Glu81, Asp83, His147, Asp166, and His227. In terms of domain architecture, Flavodoxin-like spans 254–393 (ITIFYDSMSN…ECREHGQQIA (140 aa)). Residues 260–264 (SMSNN) and 342–369 (AFGS…ETAI) each bind FMN. One can recognise a Rubredoxin-like domain in the interval 441-492 (CQCMVCTVCNWVYDPAKGEPNQGIEVGTTWADVPDYFLCPECHLGKDVFVEY). Positions 446, 449, 479, and 482 each coordinate Fe cation.

It in the N-terminal section; belongs to the zinc metallo-hydrolase group 3 family. In terms of assembly, homotetramer. Fe cation is required as a cofactor. Requires FMN as cofactor.

The protein resides in the cytoplasm. The protein operates within nitrogen metabolism; nitric oxide reduction. In terms of biological role, anaerobic nitric oxide reductase; uses NADH to detoxify nitric oxide (NO), protecting several 4Fe-4S NO-sensitive enzymes. Has at least 2 reductase partners, only one of which (NorW, flavorubredoxin reductase) has been identified. NO probably binds to the di-iron center; electrons enter from the NorW at rubredoxin and are transferred sequentially to the FMN center and the di-iron center. Also able to function as an aerobic oxygen reductase. The protein is Anaerobic nitric oxide reductase flavorubredoxin of Vibrio vulnificus (strain YJ016).